The sequence spans 152 residues: Large ribosomal subunit protein uL13 (152 aa).

Belongs to the universal ribosomal protein uL13 family. In terms of assembly, part of the 50S ribosomal subunit.

Its function is as follows. This protein is one of the early assembly proteins of the 50S ribosomal subunit, although it is not seen to bind rRNA by itself. It is important during the early stages of 50S assembly. The protein is Large ribosomal subunit protein uL13 of Wolbachia pipientis subsp. Culex pipiens (strain wPip).